A 156-amino-acid chain; its full sequence is Small ribosomal subunit protein bS6 (156 aa).

The segment at 95-156 is disordered; it reads AITETSPLAK…DRDEQSEDSE (62 aa). Residues 117–126 show a composition bias toward basic and acidic residues; the sequence is RSGRDRDESG.

This sequence belongs to the bacterial ribosomal protein bS6 family.

Functionally, binds together with bS18 to 16S ribosomal RNA. This chain is Small ribosomal subunit protein bS6, found in Nitrosococcus oceani (strain ATCC 19707 / BCRC 17464 / JCM 30415 / NCIMB 11848 / C-107).